A 98-amino-acid chain; its full sequence is NADH-ubiquinone oxidoreductase chain 4L (98 aa).

3 helical membrane passes run 1 to 21 (MTPV…GLAF), 29 to 49 (ALLC…LWAL), and 59 to 79 (APML…ALLV).

It belongs to the complex I subunit 4L family.

It is found in the mitochondrion membrane. It catalyses the reaction a ubiquinone + NADH + 5 H(+)(in) = a ubiquinol + NAD(+) + 4 H(+)(out). Core subunit of the mitochondrial membrane respiratory chain NADH dehydrogenase (Complex I) which catalyzes electron transfer from NADH through the respiratory chain, using ubiquinone as an electron acceptor. Part of the enzyme membrane arm which is embedded in the lipid bilayer and involved in proton translocation. In Carassius auratus (Goldfish), this protein is NADH-ubiquinone oxidoreductase chain 4L (MT-ND4L).